The chain runs to 290 residues: Small ribosomal subunit biogenesis GTPase RsgA (290 aa).

The region spanning 62–213 (KNSLVRPPIV…IADTPGFSSL (152 aa)) is the CP-type G domain. GTP is bound by residues 111–114 (SKMD) and 156–164 (GQTGVGKST). Zn(2+) contacts are provided by Cys-237, Cys-242, His-244, and Cys-250.

The protein belongs to the TRAFAC class YlqF/YawG GTPase family. RsgA subfamily. In terms of assembly, monomer. Associates with 30S ribosomal subunit, binds 16S rRNA. Requires Zn(2+) as cofactor.

The protein localises to the cytoplasm. One of several proteins that assist in the late maturation steps of the functional core of the 30S ribosomal subunit. Helps release RbfA from mature subunits. May play a role in the assembly of ribosomal proteins into the subunit. Circularly permuted GTPase that catalyzes slow GTP hydrolysis, GTPase activity is stimulated by the 30S ribosomal subunit. The protein is Small ribosomal subunit biogenesis GTPase RsgA of Streptococcus pyogenes serotype M3 (strain ATCC BAA-595 / MGAS315).